Reading from the N-terminus, the 330-residue chain is Aspartate--ammonia ligase (330 aa).

The protein belongs to the class-II aminoacyl-tRNA synthetase family. AsnA subfamily.

The protein resides in the cytoplasm. The enzyme catalyses L-aspartate + NH4(+) + ATP = L-asparagine + AMP + diphosphate + H(+). It participates in amino-acid biosynthesis; L-asparagine biosynthesis; L-asparagine from L-aspartate (ammonia route): step 1/1. The protein is Aspartate--ammonia ligase of Escherichia coli O45:K1 (strain S88 / ExPEC).